The following is a 119-amino-acid chain: AQVGTGPGGNQKIGQYEYGSGGRPFLDVAQSGSTYTFNTTNLTVNLNHGTSGSTAYSYTGPRNTINGAYSPLNDAHYFGRDYWTPSTNFNQGGQGVRQAAADLGYSTADVIDAFRQVGV.

It belongs to the peptidase M4 family. The cofactor is Ca(2+). Requires Zn(2+) as cofactor.

It localises to the secreted. Its function is as follows. Has staphylolytic activity. This Achromobacter lyticus protein is Achromolysin.